The following is a 466-amino-acid chain: tRNA modification GTPase MnmE (466 aa).

R23, E86, and K125 together coordinate (6S)-5-formyl-5,6,7,8-tetrahydrofolate. The TrmE-type G domain occupies 221–388 (GIPVAIVGEP…LKNELLSFVN (168 aa)). N231 serves as a coordination point for K(+). GTP is bound by residues 231-236 (NVGKST), 250-256 (SDIAGTT), and 275-278 (DTAG). S235 is a binding site for Mg(2+). Positions 250, 252, and 255 each coordinate K(+). T256 is a Mg(2+) binding site. K466 serves as a coordination point for (6S)-5-formyl-5,6,7,8-tetrahydrofolate.

This sequence belongs to the TRAFAC class TrmE-Era-EngA-EngB-Septin-like GTPase superfamily. TrmE GTPase family. As to quaternary structure, homodimer. Heterotetramer of two MnmE and two MnmG subunits. The cofactor is K(+).

The protein localises to the cytoplasm. Its function is as follows. Exhibits a very high intrinsic GTPase hydrolysis rate. Involved in the addition of a carboxymethylaminomethyl (cmnm) group at the wobble position (U34) of certain tRNAs, forming tRNA-cmnm(5)s(2)U34. The protein is tRNA modification GTPase MnmE of Flavobacterium johnsoniae (strain ATCC 17061 / DSM 2064 / JCM 8514 / BCRC 14874 / CCUG 350202 / NBRC 14942 / NCIMB 11054 / UW101) (Cytophaga johnsonae).